We begin with the raw amino-acid sequence, 216 residues long: MKYLKIYVLRSRLLKDGNLAFFKVKNLQFFDKNFFVTEIRRYLLLDLESWNITNVMFFVTNNLKNTSTFHVVHNFLGLEELKQSLLEITKKFKLLRFKLCSKSYQGNKFFAVLNAFEVKDFLSGDIIFPPHLKLLNSRELLFTKISFNITLKILLKIEAKKASFQKPIKRLNLIIEKDEFFDNYMIFDLTTDGSVTPFNAFIKALQSSNLVTLTNA.

The protein belongs to the RNA polymerase alpha chain family. In plastids the minimal PEP RNA polymerase catalytic core is composed of four subunits: alpha, beta, beta', and beta''. When a (nuclear-encoded) sigma factor is associated with the core the holoenzyme is formed, which can initiate transcription.

It is found in the plastid. Its subcellular location is the chloroplast. The enzyme catalyses RNA(n) + a ribonucleoside 5'-triphosphate = RNA(n+1) + diphosphate. Functionally, DNA-dependent RNA polymerase catalyzes the transcription of DNA into RNA using the four ribonucleoside triphosphates as substrates. In Euglena gracilis, this protein is DNA-directed RNA polymerase subunit alpha (rpoA).